We begin with the raw amino-acid sequence, 83 residues long: Cell division topological specificity factor (83 aa).

The protein belongs to the MinE family.

Functionally, prevents the cell division inhibition by proteins MinC and MinD at internal division sites while permitting inhibition at polar sites. This ensures cell division at the proper site by restricting the formation of a division septum at the midpoint of the long axis of the cell. The polypeptide is Cell division topological specificity factor (Bordetella parapertussis (strain 12822 / ATCC BAA-587 / NCTC 13253)).